Consider the following 178-residue polypeptide: Ribosome maturation factor RimM (178 aa).

In terms of domain architecture, PRC barrel spans 100-178 (DEGEFYWHQL…EIRVDWDADF (79 aa)).

The protein belongs to the RimM family. Binds ribosomal protein uS19.

Its subcellular location is the cytoplasm. Functionally, an accessory protein needed during the final step in the assembly of 30S ribosomal subunit, possibly for assembly of the head region. Essential for efficient processing of 16S rRNA. May be needed both before and after RbfA during the maturation of 16S rRNA. It has affinity for free ribosomal 30S subunits but not for 70S ribosomes. This chain is Ribosome maturation factor RimM, found in Azotobacter vinelandii (strain DJ / ATCC BAA-1303).